We begin with the raw amino-acid sequence, 317 residues long: Probable RuBisCO transcriptional regulator (317 aa).

Residues 6-63 (FTLDQLRILKAIAKEGSFKKAANSLYVSQPAISLQIQNLERQLNVALFERGNKKATLT) form the HTH lysR-type domain. A DNA-binding region (H-T-H motif) is located at residues 23 to 42 (FKKAANSLYVSQPAISLQIQ).

This sequence belongs to the LysR transcriptional regulatory family.

Its subcellular location is the plastid. It localises to the chloroplast. Functionally, trans-acting transcriptional regulator of RuBisCO genes (rbcL and rbcS) expression. The polypeptide is Probable RuBisCO transcriptional regulator (rbcR) (Porphyra purpurea (Red seaweed)).